A 258-amino-acid chain; its full sequence is Tryptophan synthase alpha chain (258 aa).

Catalysis depends on proton acceptor residues E46 and D57.

Belongs to the TrpA family. In terms of assembly, tetramer of two alpha and two beta chains.

The enzyme catalyses (1S,2R)-1-C-(indol-3-yl)glycerol 3-phosphate + L-serine = D-glyceraldehyde 3-phosphate + L-tryptophan + H2O. It functions in the pathway amino-acid biosynthesis; L-tryptophan biosynthesis; L-tryptophan from chorismate: step 5/5. Its function is as follows. The alpha subunit is responsible for the aldol cleavage of indoleglycerol phosphate to indole and glyceraldehyde 3-phosphate. The polypeptide is Tryptophan synthase alpha chain (Phocaeicola vulgatus (strain ATCC 8482 / DSM 1447 / JCM 5826 / CCUG 4940 / NBRC 14291 / NCTC 11154) (Bacteroides vulgatus)).